Reading from the N-terminus, the 551-residue chain is Glucose-6-phosphate isomerase (551 aa).

Catalysis depends on Glu352, which acts as the Proton donor. Residues His383 and Lys511 contribute to the active site.

Belongs to the GPI family.

It localises to the cytoplasm. It carries out the reaction alpha-D-glucose 6-phosphate = beta-D-fructose 6-phosphate. Its pathway is carbohydrate biosynthesis; gluconeogenesis. The protein operates within carbohydrate degradation; glycolysis; D-glyceraldehyde 3-phosphate and glycerone phosphate from D-glucose: step 2/4. Functionally, catalyzes the reversible isomerization of glucose-6-phosphate to fructose-6-phosphate. The sequence is that of Glucose-6-phosphate isomerase from Chlorobium luteolum (strain DSM 273 / BCRC 81028 / 2530) (Pelodictyon luteolum).